The primary structure comprises 250 residues: U6 snRNA phosphodiesterase 1 (250 aa).

A disordered region spans residues 1–31 (MALVSYSSSEEDEGETSEPPGRRLPPLPPPT). Residues 22-31 (RRLPPLPPPT) are compositionally biased toward pro residues. The Proton acceptor role is filled by histidine 105. 105–107 (HIS) serves as a coordination point for AMP. UMP is bound by residues glutamine 149, tyrosine 187, and 191–195 (SFHVS). Residues tyrosine 187 and 189–195 (EPSFHVS) contribute to the AMP site. Histidine 193 (proton donor) is an active-site residue.

This sequence belongs to the 2H phosphoesterase superfamily. USB1 family.

It is found in the nucleus. It catalyses the reaction a 3'-end uridylyl-uridine-RNA = a 3'-end 2',3'-cyclophospho-uridine-RNA + uridine. The enzyme catalyses a 3'-end uridylyl-adenosine-RNA = a 3'-end 2',3'-cyclophospho-uridine-RNA + adenosine. 3'-5' RNA exonuclease that trims the 3' end of oligo(U) and oligo(A) tracts of the pre-U6 small nuclear RNA (snRNA) molecule, leading to the formation of a mature U6 snRNA 3' end-terminated with a 2',3'-cyclic phosphate. Participates in the U6 snRNA 3' end processing that prevents U6 snRNA degradation. In addition also removes uridines from the 3' end of U6atac snRNA and possibly the vault RNA VTRNA1-1. This is U6 snRNA phosphodiesterase 1 from Xenopus laevis (African clawed frog).